A 1872-amino-acid chain; its full sequence is Plexin-A3 (1872 aa).

The N-terminal stretch at 1-19 (MHTVCLLPLLFFTIGGCLG) is a signal peptide. In terms of domain architecture, Sema spans 20–489 (SSRPFRTFVV…SEKQVSQLPV (470 aa)). At 20-1220 (SSRPFRTFVV…ITADRALTLP (1201 aa)) the chain is on the extracellular side. Residue Asn-60 is glycosylated (N-linked (GlcNAc...) asparagine). 9 disulfide bridges follow: Cys-78–Cys-87, Cys-113–Cys-121, Cys-267–Cys-388, Cys-283–Cys-339, Cys-357–Cys-376, Cys-492–Cys-509, Cys-498–Cys-540, Cys-501–Cys-518, and Cys-512–Cys-524. Asn-549 carries an N-linked (GlcNAc...) asparagine glycan. Cys-575 and Cys-595 are oxidised to a cystine. IPT/TIG domains lie at 841-934 (PRIT…YSFV), 936-1021 (PTLD…YTYT), 1024-1123 (PTVT…FTYY), and 1126-1212 (PSFE…LHIT). A glycan (N-linked (GlcNAc...) asparagine) is linked at Asn-1163. The helical transmembrane segment at 1221 to 1241 (AMVGLAAGGGLLLLAITVVLV) threads the bilayer. Residues 1240 to 1294 (LVAYKRKTQDADRTLKRLQLQMDNLESRVALECKEAFAELQTDINELTNHMDGVQ) are a coiled coil. The Cytoplasmic portion of the chain corresponds to 1242–1872 (AYKRKTQDAD…QIITLVSSSS (631 aa)). The residue at position 1597 (Ser-1597) is a Phosphoserine.

The protein belongs to the plexin family.

The protein localises to the cell membrane. Functionally, coreceptor for SEMA3A and SEMA3F. Necessary for signaling by class 3 semaphorins and subsequent remodeling of the cytoskeleton. Plays a role in axon guidance in the developing nervous system. Regulates the migration of sympathetic neurons, but not of neural crest precursors. Required for normal dendrite spine morphology in pyramidal neurons. May play a role in regulating semaphorin-mediated programmed cell death in the developing nervous system. Class 3 semaphorins bind to a complex composed of a neuropilin and a plexin. The plexin modulates the affinity of the complex for specific semaphorins, and its cytoplasmic domain is required for the activation of down-stream signaling events in the cytoplasm. This is Plexin-A3 (Plxna3) from Rattus norvegicus (Rat).